Reading from the N-terminus, the 674-residue chain is Sodium/myo-inositol cotransporter 2 (674 aa).

Residues 1-27 (MESSTSSPQPPLSDPLDPFPQRSLEPG) lie on the Extracellular side of the membrane. A helical transmembrane segment spans residues 28-48 (DIAVLVLYFLFVLAVGLWSTV). Residues 49-56 (KTKRDTVK) lie on the Cytoplasmic side of the membrane. The helical transmembrane segment at 57-77 (GYFLAGGDMVWWPVGASLFAS) threads the bilayer. Residues 78 to 102 (NVGSGHFVGLAGSGAATGISVAAYE) are Extracellular-facing. Residues 103-123 (FNGMFSVLMLAWIFLPIYIAG) traverse the membrane as a helical segment. The Cytoplasmic segment spans residues 124 to 140 (QVTTMPEYLRRRFGGSR). Residues 141-161 (IAITLAVLYLFIYIFTKISVD) traverse the membrane as a helical segment. Topologically, residues 162-180 (MYAGAIFIQQSLHLDLYLS) are extracellular. A helical membrane pass occupies residues 181–201 (VVGLLAVTALYTVAGGLAAVI). At 202–208 (YTDALQT) the chain is on the cytoplasmic side. The helical transmembrane segment at 209–229 (LIMLVGALTLMGYSFAAVGGM) threads the bilayer. Over 230–272 (EGLQEKYFLALPSNRSENSSCGLPREDAFHLFRDPLTSDLPWP) the chain is Extracellular. The helical transmembrane segment at 273–293 (GILFGMSIPSLWYWCTDQVIV) threads the bilayer. At 294 to 308 (QRSLAAKNLSHAKGG) the chain is on the cytoplasmic side. A helical membrane pass occupies residues 309-329 (SLMAAYLKVLPLFIMVFPGMV). At 330-375 (SRILFPDQVACADPETCQRVCNNPSGCSDIAYPKLVLELLPTGLRG) the chain is on the extracellular side. The chain crosses the membrane as a helical span at residues 376-396 (LMMAVMVAALMSSLTSIFNSA). Over 397–418 (STIFTMDLWNHVRPRASEKELM) the chain is Cytoplasmic. The helical transmembrane segment at 419–439 (IVGRVFVLLLVLVSVLWIPVV) threads the bilayer. At 440 to 446 (QASQGGQ) the chain is on the extracellular side. The helical transmembrane segment at 447–467 (LFVYIQAISSYLQPPVAMVFV) threads the bilayer. Residues 468 to 479 (LGCFWKRANEKG) lie on the Cytoplasmic side of the membrane. Residues 480-500 (AFWGLVLGLLLGFIRLILDFI) form a helical membrane-spanning segment. Residues 501 to 521 (YVEPACHQPDERPSVVKNVHY) lie on the Extracellular side of the membrane. The chain crosses the membrane as a helical span at residues 522-542 (LYFSMILSSVTVLTVTVMSLL). Residues 543–653 (TEPPSKEMIS…SIEENPVVKT (111 aa)) are Cytoplasmic-facing. Residues 654–674 (LLDVNCLLCICCAFFLWGYFA) form a helical membrane-spanning segment.

Belongs to the sodium:solute symporter (SSF) (TC 2.A.21) family. Expressed in brain, lung and kidney. In the kidney, strongly expressed in the cortex, at the luminal side of proximal convoluted tubules and in BBMVs. Weaker expression observed in the medulla (at protein level).

The protein resides in the membrane. The protein localises to the apical cell membrane. The enzyme catalyses myo-inositol(out) + 2 Na(+)(out) = myo-inositol(in) + 2 Na(+)(in). The catalysed reaction is 1D-chiro-inositol(out) + 2 Na(+)(out) = 1D-chiro-inositol(in) + 2 Na(+)(in). It catalyses the reaction D-glucose(out) + 2 Na(+)(out) = D-glucose(in) + 2 Na(+)(in). It carries out the reaction D-xylose(out) + 2 Na(+)(out) = D-xylose(in) + 2 Na(+)(in). With respect to regulation, MI transport activity stimulated five-fold under 24 hour hypertonic shock conditions. MI inward currents were gradually inhibited as increasing amounts of phlorizin were added to the superfusion medium. When sodium is replaced by potassium, MI uptake is dramatically reduced and in the presence of L-fucose or D-chiro-inositol (DCI), the specific accumulation of tracer amounts of MI is also reduced. Its function is as follows. Involved in the sodium-dependent cotransport of myo-inositol (MI) with a Na(+):MI stoichiometry of 2:1. Exclusively responsible for apical MI transport and absorption in intestine. Can also transport D-chiro-inositol (DCI) but not L-fucose. Exhibits stereospecific cotransport of both D-glucose and D-xylose. May induce apoptosis through the TNF-alpha, PDCD1 pathway. May play a role in the regulation of MI concentration in serum, involving reabsorption in at least the proximal tubule of the kidney. The protein is Sodium/myo-inositol cotransporter 2 of Oryctolagus cuniculus (Rabbit).